The following is a 456-amino-acid chain: Glycine--tRNA ligase (456 aa).

Substrate-binding residues include Arg-98 and Glu-168. ATP-binding positions include 200–202 (RNE), 210–215 (FRTREF), 285–286 (EL), and 329–332 (GVER). 215–219 (FEQME) provides a ligand contact to substrate. Residue 325-329 (EPSVG) participates in substrate binding.

It belongs to the class-II aminoacyl-tRNA synthetase family. As to quaternary structure, homodimer.

Its subcellular location is the cytoplasm. It catalyses the reaction tRNA(Gly) + glycine + ATP = glycyl-tRNA(Gly) + AMP + diphosphate. In terms of biological role, catalyzes the attachment of glycine to tRNA(Gly). The protein is Glycine--tRNA ligase of Mycoplasma capricolum subsp. capricolum (strain California kid / ATCC 27343 / NCTC 10154).